Consider the following 361-residue polypeptide: DNA replication and repair protein RecF (361 aa).

G30–T37 is an ATP binding site.

It belongs to the RecF family.

The protein resides in the cytoplasm. The RecF protein is involved in DNA metabolism; it is required for DNA replication and normal SOS inducibility. RecF binds preferentially to single-stranded, linear DNA. It also seems to bind ATP. This is DNA replication and repair protein RecF from Yersinia pseudotuberculosis serotype O:1b (strain IP 31758).